A 283-amino-acid polypeptide reads, in one-letter code: Thymidylate synthase (283 aa).

Residues arginine 31 and 145–146 each bind dUMP; that span reads RR. Cysteine 165 acts as the Nucleophile in catalysis. Residues 185–188, asparagine 196, and 226–228 contribute to the dUMP site; these read RSAD and HIY. Residue aspartate 188 coordinates (6R)-5,10-methylene-5,6,7,8-tetrahydrofolate. Position 282 (serine 282) interacts with (6R)-5,10-methylene-5,6,7,8-tetrahydrofolate.

This sequence belongs to the thymidylate synthase family. Bacterial-type ThyA subfamily. As to quaternary structure, homodimer.

The protein localises to the cytoplasm. The catalysed reaction is dUMP + (6R)-5,10-methylene-5,6,7,8-tetrahydrofolate = 7,8-dihydrofolate + dTMP. It participates in pyrimidine metabolism; dTTP biosynthesis. Its function is as follows. Catalyzes the reductive methylation of 2'-deoxyuridine-5'-monophosphate (dUMP) to 2'-deoxythymidine-5'-monophosphate (dTMP) while utilizing 5,10-methylenetetrahydrofolate (mTHF) as the methyl donor and reductant in the reaction, yielding dihydrofolate (DHF) as a by-product. This enzymatic reaction provides an intracellular de novo source of dTMP, an essential precursor for DNA biosynthesis. This Symbiobacterium thermophilum (strain DSM 24528 / JCM 14929 / IAM 14863 / T) protein is Thymidylate synthase.